A 360-amino-acid chain; its full sequence is DNA replication and repair protein RecF (360 aa).

Residue 30-37 (GQNGSGKT) coordinates ATP.

The protein belongs to the RecF family.

The protein localises to the cytoplasm. Functionally, the RecF protein is involved in DNA metabolism; it is required for DNA replication and normal SOS inducibility. RecF binds preferentially to single-stranded, linear DNA. It also seems to bind ATP. This is DNA replication and repair protein RecF from Shewanella piezotolerans (strain WP3 / JCM 13877).